Consider the following 163-residue polypeptide: Jun dimerization protein 2 (163 aa).

Disordered stretches follow at residues 1–20 (MMPGQIPDPSVTTGSLPGLG) and 58–89 (GKRPQPVKSELDEEEERRKRRREKNKVAAARC). Lys-65 participates in a covalent cross-link: Glycyl lysine isopeptide (Lys-Gly) (interchain with G-Cter in SUMO2). The bZIP domain maps to 72–135 (EERRKRRREK…QQLILMLNRH (64 aa)). Positions 74–96 (RRKRRREKNKVAAARCRNKKKER) are basic motif. The tract at residues 100–128 (LQRESERLELMNAELKTQIEELKQERQQL) is leucine-zipper. Residue Thr-148 is modified to Phosphothreonine; by MAPK8.

Belongs to the bZIP family. ATF subfamily. In terms of assembly, forms a homodimer or heterodimer with JUN, JUNB, JUND, CEBPG and ATF2 thereby inhibiting transactivation by JUN, ATF2 and CEBPG. Binds multiple DNA elements such as cAMP-response element (CRE) and TPA response element (TRE) either as homodimer or heterodimer. Interacts with IRF2BP1. Post-translationally, phosphorylation of Thr-148 by MAPK8 in response to different stress conditions such as, UV irradiation, oxidatives stress and anisomycin treatments. In terms of processing, polyubiquitinated; probably by IRF2BP1.

The protein resides in the nucleus. Functionally, component of the AP-1 transcription factor that represses transactivation mediated by the Jun family of proteins. Involved in a variety of transcriptional responses associated with AP-1 such as UV-induced apoptosis, cell differentiation, tumorigenesis and antitumogeneris. Can also function as a repressor by recruiting histone deacetylase 3/HDAC3 to the promoter region of JUN. May control transcription via direct regulation of the modification of histones and the assembly of chromatin. The protein is Jun dimerization protein 2 (JDP2) of Homo sapiens (Human).